The following is a 423-amino-acid chain: Histidine--tRNA ligase (423 aa).

Belongs to the class-II aminoacyl-tRNA synthetase family. As to quaternary structure, homodimer.

The protein localises to the cytoplasm. The enzyme catalyses tRNA(His) + L-histidine + ATP = L-histidyl-tRNA(His) + AMP + diphosphate + H(+). This chain is Histidine--tRNA ligase, found in Haemophilus influenzae (strain PittEE).